The primary structure comprises 501 residues: MAAPRAATPGPGGGARKPELDLELGSSTQTSHRLLAYSDALLSIIATVMILPVAHTKIHPDQKLGESVQQLLLTKIAVYLMTFLIVTVAWAAHVRLFQVIELIDDVLALLNLACMMIITFLPYTFSLMASFPGVPFGIFLFSVCAVVIGLIQAVIVVYGFYHPHLLNQQIQVSENQNFYKRHILKIILRGPALCFLAAIFSFFFIPLSYLLLGLVIVFPHLSRFITWCKTKIVGHRDEEEASYSLETFSFYLSEPLSKERVEAFSDGVYAIVATLLILDICEDNVPDPREVGEKFHGSLLEALSEYGPNYLAYFGSFVTIGLLWFVHHSLFLYVTKATRLMGLLNILSLAFIGGLPLAYQLTSEFAEKSHNEIEAIQVSCVITFFASIFQFAIWTTALLHERETLHPFARYGGKEHAFMFAKLALYPCVSLGAFFLTCLLSEFSTEIFHLMQIVIPFAFLALRIFVRISLTVIKSVMSLSRRKVVLLEEEEACLSPTETHS.

Residues Met-1–Leu-20 form a disordered region. Topologically, residues Met-1–Ser-31 are cytoplasmic. A helical membrane pass occupies residues His-32–Ala-54. The RxxxFSD motif 1 signature appears at Arg-33 to Asp-39. Topologically, residues His-55–Lys-75 are lumenal. Residues Thr-56–Asp-61 are short helix H1-1. Residues Lys-63–Gln-69 are short helix H2-1. A helical membrane pass occupies residues Ile-76–Gln-98. The Cytoplasmic portion of the chain corresponds to Val-99–Asp-104. A helical membrane pass occupies residues Asp-105–Ser-126. Residues Leu-127–Phe-136 are Lumenal-facing. Residues Gly-137–Tyr-158 form a helical membrane-spanning segment. The Cytoplasmic portion of the chain corresponds to Gly-159–His-182. A helical transmembrane segment spans residues Ile-183–Phe-203. Residues Phe-204–Ser-208 lie on the Lumenal side of the membrane. A helical transmembrane segment spans residues Tyr-209–Cys-228. Residues Lys-229–Ser-257 lie on the Cytoplasmic side of the membrane. A helical membrane pass occupies residues Lys-258–Glu-282. Residues Arg-260–Asp-266 carry the RxxxFSD motif 2 motif. Residues Asp-283–Asn-309 lie on the Lumenal side of the membrane. Residues Pro-288 to His-296 form a short helix H1-2 region. Residues Ser-298–Ser-304 form a short helix H2-2 region. Residues Tyr-310–Leu-332 form a helical membrane-spanning segment. The Cytoplasmic segment spans residues Tyr-333 to Thr-338. Residues Arg-339–Gln-360 traverse the membrane as a helical segment. The Lumenal segment spans residues Leu-361 to Ala-375. A helical membrane pass occupies residues Ile-376–Thr-396. Residues Ala-397–His-416 are Cytoplasmic-facing. The helical transmembrane segment at Ala-417–Leu-440 threads the bilayer. Topologically, residues Ser-441–Glu-442 are lumenal. Residues Phe-443–Ser-469 traverse the membrane as a helical segment. At Leu-470–Ser-501 the chain is on the cytoplasmic side.

The protein belongs to the TMEM175 family. Homodimer.

It is found in the endosome membrane. It localises to the lysosome membrane. It catalyses the reaction H(+)(in) = H(+)(out). It carries out the reaction K(+)(in) = K(+)(out). Its activity is regulated as follows. Active at low pH (under pH 4.6): proton channel activity is activated by luminal side protons. Polyunsaturated fatty acids, such as arachidonic acid, also activate the channel activity. Functionally, proton-activated proton channel that catalyzes proton efflux from endosomes and lysosomes to maintain a steady-state pH. Activated at low pH (under pH 4.6) by luminal side protons: selectively mediates lysosomal proton release from lysosomes, eliciting a proton leak that balances V-ATPase activity to maintain pH homeostasis. Regulation of lumenal pH stability is required for autophagosome-lysosome fusion. Also acts as a potassium channel at higher pH, regulating potassium conductance in endosomes and lysosomes. This is Endosomal/lysosomal proton channel TMEM175 from Gallus gallus (Chicken).